The following is a 310-amino-acid chain: tRNA uridine(34) hydroxylase (310 aa).

The region spanning 127 to 225 is the Rhodanese domain; sequence KNQNTIVIDT…YLDEISKEEN (99 aa). Residue Cys-185 is the Cysteine persulfide intermediate of the active site.

This sequence belongs to the TrhO family.

It carries out the reaction uridine(34) in tRNA + AH2 + O2 = 5-hydroxyuridine(34) in tRNA + A + H2O. Catalyzes oxygen-dependent 5-hydroxyuridine (ho5U) modification at position 34 in tRNAs. The protein is tRNA uridine(34) hydroxylase of Prochlorococcus marinus (strain MIT 9215).